The primary structure comprises 417 residues: Serine hydroxymethyltransferase (417 aa).

(6S)-5,6,7,8-tetrahydrofolate is bound by residues Leu-121 and 125–127; that span reads GHL. The residue at position 229 (Lys-229) is an N6-(pyridoxal phosphate)lysine. Residue 355 to 357 participates in (6S)-5,6,7,8-tetrahydrofolate binding; the sequence is SPF.

This sequence belongs to the SHMT family. As to quaternary structure, homodimer. Pyridoxal 5'-phosphate is required as a cofactor.

It is found in the cytoplasm. It catalyses the reaction (6R)-5,10-methylene-5,6,7,8-tetrahydrofolate + glycine + H2O = (6S)-5,6,7,8-tetrahydrofolate + L-serine. It participates in one-carbon metabolism; tetrahydrofolate interconversion. Its pathway is amino-acid biosynthesis; glycine biosynthesis; glycine from L-serine: step 1/1. Its function is as follows. Catalyzes the reversible interconversion of serine and glycine with tetrahydrofolate (THF) serving as the one-carbon carrier. This reaction serves as the major source of one-carbon groups required for the biosynthesis of purines, thymidylate, methionine, and other important biomolecules. Also exhibits THF-independent aldolase activity toward beta-hydroxyamino acids, producing glycine and aldehydes, via a retro-aldol mechanism. This chain is Serine hydroxymethyltransferase, found in Stenotrophomonas maltophilia (strain K279a).